A 908-amino-acid polypeptide reads, in one-letter code: DNA (cytosine-5)-methyltransferase 3A (908 aa).

Residues 1–13 (MPSSGPGDTSISS) show a composition bias toward polar residues. 2 disordered regions span residues 1–183 (MPSS…PMPR) and 226–281 (SQAS…PEYE). Residues 14–37 (LEREDDRKEGEEQEENRGKEERQE) are compositionally biased toward basic and acidic residues. Basic residues predominate over residues 44-54 (KVGRPGRKRKH). Over residues 69 to 80 (TTKSQPTAQDSG) the composition is skewed to polar residues. Serine 102 carries the post-translational modification Phosphoserine. A compositionally biased stretch (low complexity) spans 110-124 (GAPAEGEGTETPPEA). Threonine 120 is modified (phosphothreonine). Residue lysine 158 forms a Glycyl lysine isopeptide (Lys-Gly) (interchain with G-Cter in SUMO2) linkage. Arginine 167 carries the omega-N-methylarginine modification. Residues 195–399 (SKRKRDEWLA…DTGKAVEVQN (205 aa)) are interaction with DNMT1 and DNMT3B. Residues serine 239 and serine 251 each carry the phosphoserine modification. The span at 242–256 (AVQQPTDPASPTVAT) shows a compositional bias: polar residues. Position 257 is a phosphothreonine (threonine 257). One can recognise a PWWP domain in the interval 257 to 315 (TPEPVGADAGDKNATKAADDEPEYEDGRGFGIGELVWGKLRGFSWWPGRIVSWWMTGRS). The segment covering 265 to 275 (AGDKNATKAAD) has biased composition (basic and acidic residues). 2 positions are modified to phosphoserine: serine 386 and serine 389. Residues 443–462 (AYAPPPPAKKPRKSTTEKPK) are disordered. In terms of domain architecture, ADD spans 478–610 (EVRQKCRNIE…LQMFFANNHD (133 aa)). The GATA-type; atypical zinc finger occupies 489–519 (ICISCGSLNVTLEHPLFIGGMCQNCKNCFLE). Residues 490-582 (CISCGSLNVT…KEDPWNCYMC (93 aa)) form an interaction with the PRC2/EED-EZH2 complex region. The PHD-type; atypical zinc finger occupies 530 to 586 (QSYCTICCGGREVLMCGNNNCCRCFCVECVDLLVGPGAAQAAIKEDPWNCYMCGHKG). Residues 630–908 (IRVLSLFDGI…APLKEYFACV (279 aa)) enclose the SAM-dependent MTase C5-type domain. Residues 637–641 (DGIAT), glutamate 660, and 682–684 (DVR) contribute to the S-adenosyl-L-methionine site. Cysteine 706 is an active-site residue. Residue cysteine 706 is modified to S-methylcysteine; by autocatalysis. 887–889 (RSW) is an S-adenosyl-L-methionine binding site.

Belongs to the class I-like SAM-binding methyltransferase superfamily. C5-methyltransferase family. As to quaternary structure, heterotetramer composed of 1 DNMT3A homodimer and 2 DNMT3L subunits (DNMT3L-DNMT3A-DNMT3A-DNMT3L). Interacts with DNMT1 and DNMT3B. Interacts with MPHOSPH8. Interacts with histone H3 that is not methylated at 'Lys-4' (H3K4). Binds the ZBTB18 transcriptional repressor. Interacts with SETDB1. Associates with HDAC1 through its ADD domain. Interacts with UHRF1. Interacts with the PRC2/EED-EZH2 complex. Interacts with UBC9, PIAS1 and PIAS2. Interacts with SPOCD1. Interacts with ZNF263; recruited to the SIX3 promoter along with other proteins involved in chromatin modification and transcriptional corepression where it contributes to transcriptional repression. In terms of processing, sumoylated; sumoylation disrupts the ability to interact with histone deacetylases (HDAC1 and HDAC2) and repress transcription. Post-translationally, auto-methylated at Cys-706: auto-methylation takes place in absence of DNA substrate and inactivates the DNA methyltransferase activity. Inactivation by auto-methylation may be used to inactivate unused DNA methyltransferases in the cell.

It is found in the nucleus. Its subcellular location is the chromosome. It localises to the cytoplasm. It catalyses the reaction a 2'-deoxycytidine in DNA + S-adenosyl-L-methionine = a 5-methyl-2'-deoxycytidine in DNA + S-adenosyl-L-homocysteine + H(+). The catalysed reaction is L-cysteinyl-[protein] + S-adenosyl-L-methionine = S-methyl-L-cysteinyl-[protein] + S-adenosyl-L-homocysteine + H(+). Activated by binding to the regulatory factor DNMT3L. Auto-methylation at Cys-706 in absence of DNA inactivates the DNA methyltransferase activity. Its function is as follows. Required for genome-wide de novo methylation and is essential for the establishment of DNA methylation patterns during development. DNA methylation is coordinated with methylation of histones. It modifies DNA in a non-processive manner and also methylates non-CpG sites. May preferentially methylate DNA linker between 2 nucleosomal cores and is inhibited by histone H1. Plays a role in paternal and maternal imprinting. Required for methylation of most imprinted loci in germ cells. Acts as a transcriptional corepressor for ZBTB18. Recruited to trimethylated 'Lys-36' of histone H3 (H3K36me3) sites. Can actively repress transcription through the recruitment of HDAC activity. Also has weak auto-methylation activity on Cys-706 in absence of DNA. The sequence is that of DNA (cytosine-5)-methyltransferase 3A (Dnmt3a) from Rattus norvegicus (Rat).